A 105-amino-acid polypeptide reads, in one-letter code: uncharacterized protein (105 aa).

A helical transmembrane segment spans residues 29 to 49 (NAFLLILSEAYLLFVFLSYLI).

It localises to the membrane. This is an uncharacterized protein from Saccharomyces cerevisiae (strain ATCC 204508 / S288c) (Baker's yeast).